The primary structure comprises 78 residues: HssA/B-like protein 29 (78 aa).

The segment at 1-31 (MTLFSSITSISKTNTSSKSSLNSFSGSSLSM) is disordered.

This sequence belongs to the hssA/B family.

The chain is HssA/B-like protein 29 (hssl29) from Dictyostelium discoideum (Social amoeba).